A 635-amino-acid chain; its full sequence is MGFSGSRAWSKWLTICLAITHPFSVTAKSAADYYVHSLPGQPEGPLLKMHAGHIEISPETSGNLFFWHFENRHIADKPRTVVWLNGGPGCSSEDGALMEIGPYRLIDKETLNYTEGSWDEFANLLFVDQPVGTGFSYGSTEHYVHELDEMASQFVTFLEKWFEIFPHYEPDDLYFAGESYAGQYIPYIARAVLDRNKKQDVQANNRIWNLKGLLIGNGWISPQHQYPAYLPYVYQEGVVQAGTQEANLIEAKAAKCMKELNVEDTTGTVHIPDCEDILQAILDYTHKGKRCINMYDIRLTDDYSACGMNWPPDLRDIQPYLRRKDVVKALHINEEKQTGWTECAGAVGSSLKARNSKPAVELLPGLLEEGLPILLFSGQKDLICNHVGTEDMIKNMKWSGGTGFELSPGVWAPRQDWTFEGEPAGIYQQARNLTYVLFYNASHMVPFDYPRRSRDMLDKFLGVDITHIGGDPADSRIDGEKGPTTSVGAHPNSTAAAEREKEKLNTAAWKAYYKSGEVALVIVAIAAFAWGIFIWRSRRKHQSSGYRSIYPMLGLNSTGSLGQISHKHSRRNGDIEAADFDETELDDQPSQAFLSRSSRDGDAYAVGEEGSDEEDGASDGQQPMFDQSRGEEGRS.

Residues 1–27 form the signal peptide; it reads MGFSGSRAWSKWLTICLAITHPFSVTA. Residues 28 to 514 are Lumenal-facing; that stretch reads KSAADYYVHS…NTAAWKAYYK (487 aa). Asparagine 112 is a glycosylation site (N-linked (GlcNAc...) asparagine). Residues serine 179 and aspartate 381 contribute to the active site. Asparagine 432 and asparagine 440 each carry an N-linked (GlcNAc...) asparagine glycan. The active site involves histidine 443. Residues 472-497 form a disordered region; that stretch reads PADSRIDGEKGPTTSVGAHPNSTAAA. A compositionally biased stretch (polar residues) spans 483-495; sequence PTTSVGAHPNSTA. An N-linked (GlcNAc...) asparagine glycan is attached at asparagine 492. The chain crosses the membrane as a helical span at residues 515-535; that stretch reads SGEVALVIVAIAAFAWGIFIW. Residues 536-635 lie on the Cytoplasmic side of the membrane; the sequence is RSRRKHQSSG…DQSRGEEGRS (100 aa). The tract at residues 583-635 is disordered; it reads TELDDQPSQAFLSRSSRDGDAYAVGEEGSDEEDGASDGQQPMFDQSRGEEGRS.

This sequence belongs to the peptidase S10 family.

It localises to the golgi apparatus. Its subcellular location is the trans-Golgi network membrane. It carries out the reaction Preferential release of a C-terminal arginine or lysine residue.. Functionally, protease with a carboxypeptidase B-like function involved in the C-terminal processing of the lysine and arginine residues from protein precursors. Promotes cell fusion and is involved in the programmed cell death. In Paracoccidioides brasiliensis (strain Pb18), this protein is Pheromone-processing carboxypeptidase KEX1 (KEX1).